Consider the following 427-residue polypeptide: Peptidase B (427 aa).

Mn(2+) is bound by residues K195 and D200. Residue K207 is part of the active site. The Mn(2+) site is built by D218, D277, and E279. Residue R281 is part of the active site.

This sequence belongs to the peptidase M17 family. As to quaternary structure, homohexamer. It depends on Mn(2+) as a cofactor.

The protein resides in the cytoplasm. The catalysed reaction is Release of an N-terminal amino acid, Xaa, from a peptide or arylamide. Xaa is preferably Glu or Asp but may be other amino acids, including Leu, Met, His, Cys and Gln.. Its function is as follows. Probably plays an important role in intracellular peptide degradation. This Salmonella dublin (strain CT_02021853) protein is Peptidase B.